The primary structure comprises 386 residues: 5-hydroxytryptamine receptor 1B (386 aa).

Over 1–42 (MEEQGIQCAPPPPAASQTGVPLTNLSHNCSADGYIYQDSIAL) the chain is Extracellular. 2 N-linked (GlcNAc...) asparagine glycosylation sites follow: N24 and N28. The helical transmembrane segment at 43-68 (PWKVLLVALLALITLATTLSNAFVIA) threads the bilayer. Over 69-82 (TVYRTRKLHTPANY) the chain is Cytoplasmic. A helical transmembrane segment spans residues 83 to 107 (LIASLAVTDLLVSILVMPISTMYTV). Residues 108-115 (TGRWTLGQ) are Extracellular-facing. Residues 116–141 (VVCDFWLSSDITCCTASIMHLCVIAL) form a helical membrane-spanning segment. An intrachain disulfide couples C118 to C195. D125 and T130 together coordinate ergotamine. Positions 142-144 (DRY) match the DRY motif; important for ligand-induced conformation changes and signaling motif. Residues 142–161 (DRYWAITDAVEYSAKRTPKR) lie on the Cytoplasmic side of the membrane. The helical transmembrane segment at 162–180 (AAIMIVLVWVFSISISLPP) threads the bilayer. At 181–201 (FFWRQAKAEEEMLDCFVNTDH) the chain is on the extracellular side. V197 contributes to the ergotamine binding site. A helical transmembrane segment spans residues 202–225 (VLYTVYSTVGAFYLPTLLLIALYG). Residues 226–311 (RIYVEARSRI…AARERKATKT (86 aa)) lie on the Cytoplasmic side of the membrane. Residues 255 to 268 (DSPGSTSSVTSINS) show a composition bias toward polar residues. A disordered region spans residues 255 to 278 (DSPGSTSSVTSINSRAPDVPSESG). Residues 312–333 (LGIILGAFIVCWLPFFIISLVM) traverse the membrane as a helical segment. Topologically, residues 334-343 (PICKDACWFH) are extracellular. Residues 344-366 (MAIFDFFNWLGYLNSLINPIIYT) traverse the membrane as a helical segment. Residues 361 to 365 (NPIIY) carry the NPxxY motif; important for ligand-induced conformation changes and signaling motif. The Cytoplasmic segment spans residues 367-386 (MSNEDFKQAFHKLIRFKCAG). The S-palmitoyl cysteine moiety is linked to residue C384.

Belongs to the G-protein coupled receptor 1 family. In terms of assembly, homodimer. Heterodimer with HTR1D. Phosphorylated. Desensitization of the receptor may be mediated by its phosphorylation. In terms of processing, palmitoylated. In terms of tissue distribution, predominantly expressed in striatum and Purkinje cells.

The protein resides in the cell membrane. Its function is as follows. G-protein coupled receptor for 5-hydroxytryptamine (serotonin). Also functions as a receptor for ergot alkaloid derivatives, various anxiolytic and antidepressant drugs and other psychoactive substances, such as lysergic acid diethylamide (LSD). Ligand binding causes a conformation change that triggers signaling via guanine nucleotide-binding proteins (G proteins) and modulates the activity of downstream effectors, such as adenylate cyclase. HTR1B is coupled to G(i)/G(o) G alpha proteins and mediates inhibitory neurotransmission by inhibiting adenylate cyclase activity. Arrestin family members inhibit signaling via G proteins and mediate activation of alternative signaling pathways. Regulates the release of 5-hydroxytryptamine, dopamine and acetylcholine in the brain, and thereby affects neural activity, nociceptive processing, pain perception, mood and behavior. Besides, plays a role in vasoconstriction of cerebral arteries. This Mus musculus (Mouse) protein is 5-hydroxytryptamine receptor 1B (Htr1b).